A 428-amino-acid polypeptide reads, in one-letter code: Exodeoxyribonuclease 7 large subunit (428 aa).

Belongs to the XseA family. In terms of assembly, heterooligomer composed of large and small subunits.

It localises to the cytoplasm. It catalyses the reaction Exonucleolytic cleavage in either 5'- to 3'- or 3'- to 5'-direction to yield nucleoside 5'-phosphates.. Bidirectionally degrades single-stranded DNA into large acid-insoluble oligonucleotides, which are then degraded further into small acid-soluble oligonucleotides. This Mycobacterium leprae (strain TN) protein is Exodeoxyribonuclease 7 large subunit.